A 122-amino-acid polypeptide reads, in one-letter code: RING-box protein 1B (122 aa).

Residues 1-23 (MAEEIEVEETEDFHDMDFNDEEP) are compositionally biased toward acidic residues. A disordered region spans residues 1–28 (MAEEIEVEETEDFHDMDFNDEEPSCSGG). Residues Cys57, Cys60, Cys68, Cys71, Cys82, Cys89, His91, His94, His96, Cys108, and Asp111 each coordinate Zn(2+). The RING-type zinc-finger motif lies at 57–112 (CAICRNHIMNLCIECQADPNANQDECTVAWGECNHAFHYHCIARWLKTRLVCPLDN).

The protein belongs to the RING-box family. In terms of assembly, part of a SCF complex consisting of Skpa (SKP1), Cul1, Roc1B and a F-box protein. Highly expressed in early embryos, and in pupae. Widely expressed in adult males, while it is weakly expressed in adult females.

It localises to the cytoplasm. It is found in the nucleus. It functions in the pathway protein modification; protein ubiquitination. Its function is as follows. Component of the SCF (SKP1-CUL1-F-box protein) E3 ubiquitin ligase complex, which mediates the ubiquitination and subsequent proteasomal degradation of target proteins. Through the RING-type zinc finger, seems to recruit the E2 ubiquitination enzyme to the complex and brings it into close proximity to the substrate. The polypeptide is RING-box protein 1B (Roc1b) (Drosophila melanogaster (Fruit fly)).